The chain runs to 262 residues: MEHLERCAWFLRGTLVRATVRRHLPWALVAAMLAGSVVKELSPLPESYLSNKRNVLNVYFVKLAWAWTVCLLLPFIALTNYHLTGKTSLVLRRLSTLLVGTAIWYICTALFSNIEHYTGSCYQSPALEGIRQEHRSKQQCHREGGFWHGFDISGHSFLLTFCALMIVEEMAVLHEVKTDRGHHLHAAITTLVVALGFLTFIWVWMFLCTAVYFHDLTQKVFGTMFGLLGWYGTYGYWYLKSFSPGLPPQSCSLTLKRDTYKK.

At 1–23 (MEHLERCAWFLRGTLVRATVRRH) the chain is on the cytoplasmic side. The chain crosses the membrane as a helical span at residues 24–44 (LPWALVAAMLAGSVVKELSPL). Residues 45–57 (PESYLSNKRNVLN) lie on the Lumenal side of the membrane. Residues 58 to 78 (VYFVKLAWAWTVCLLLPFIAL) form a helical membrane-spanning segment. At 79 to 93 (TNYHLTGKTSLVLRR) the chain is on the cytoplasmic side. The chain crosses the membrane as a helical span at residues 94 to 114 (LSTLLVGTAIWYICTALFSNI). Residues 115 to 145 (EHYTGSCYQSPALEGIRQEHRSKQQCHREGG) lie on the Lumenal side of the membrane. Residues 146-166 (FWHGFDISGHSFLLTFCALMI) form a helical membrane-spanning segment. H155 is a catalytic residue. At 167 to 190 (VEEMAVLHEVKTDRGHHLHAAITT) the chain is on the cytoplasmic side. The chain crosses the membrane as a helical span at residues 191–211 (LVVALGFLTFIWVWMFLCTAV). The Lumenal portion of the chain corresponds to 212 to 218 (YFHDLTQ). H214 is an active-site residue. The helical transmembrane segment at 219-239 (KVFGTMFGLLGWYGTYGYWYL) threads the bilayer. The Cytoplasmic segment spans residues 240 to 262 (KSFSPGLPPQSCSLTLKRDTYKK).

Belongs to the FIT family. In terms of tissue distribution, widely expressed, with highest levels in white and brown adipose tissues (at protein level). In the heart, mRNA expression levels do not correlate well with protein levels, suggesting post-transcriptional regulation in this organ.

It is found in the endoplasmic reticulum membrane. It carries out the reaction an acyl-CoA + H2O = an acyl-4'-phosphopantetheine + adenosine 3',5'-bisphosphate + 2 H(+). The catalysed reaction is (9Z)-octadecenoyl-CoA + H2O = S-(9Z-octadecenoyl)-4'-phosphopantetheine + adenosine 3',5'-bisphosphate + 2 H(+). The enzyme catalyses (5Z,8Z,11Z,14Z)-eicosatetraenoyl-CoA + H2O = S-(5Z,8Z,11Z,14Z-eicosatetraenoyl)-4'-phosphopantetheine + adenosine 3',5'-bisphosphate + 2 H(+). It catalyses the reaction hexadecanoyl-CoA + H2O = S-hexadecanoyl-4'-phosphopantetheine + adenosine 3',5'-bisphosphate + 2 H(+). In terms of biological role, fatty acyl-coenzyme A (CoA) diphosphatase that hydrolyzes fatty acyl-CoA to yield acyl-4'-phosphopantetheine and adenosine 3',5'-bisphosphate. Preferentially hydrolyzes unsaturated long-chain acyl-CoA substrates such as oleoyl-CoA/(9Z)-octadecenoyl-CoA and arachidonoyl-CoA/(5Z,8Z,11Z,14Z)-eicosatetraenoyl-CoA in the endoplasmic reticulum (ER) lumen. This catalytic activity is required for maintaining ER structure and for lipid droplets (LDs) biogenesis, which are lipid storage organelles involved in maintaining lipid and energy homeostasis. Directly binds to diacylglycerol (DAGs) and triacylglycerol, which is also important for LD biogenesis. May support directional budding of nacent LDs from the ER into the cytosol by reducing DAG levels at sites of LD formation. Plays a role in the regulation of cell morphology and cytoskeletal organization. The protein is Acyl-coenzyme A diphosphatase FITM2 of Mus musculus (Mouse).